Consider the following 356-residue polypeptide: Homoserine O-acetyltransferase (356 aa).

Residues 50–335 (NVILVCHALT…DEPYGHDAFL (286 aa)) enclose the AB hydrolase-1 domain. Serine 146 acts as the Nucleophile in catalysis. Residue arginine 215 coordinates substrate. Active-site residues include aspartate 302 and histidine 331. A substrate-binding site is contributed by aspartate 332.

The protein belongs to the AB hydrolase superfamily. MetX family. In terms of assembly, homodimer.

Its subcellular location is the cytoplasm. The catalysed reaction is L-homoserine + acetyl-CoA = O-acetyl-L-homoserine + CoA. The protein operates within amino-acid biosynthesis; L-methionine biosynthesis via de novo pathway; O-acetyl-L-homoserine from L-homoserine: step 1/1. Transfers an acetyl group from acetyl-CoA to L-homoserine, forming acetyl-L-homoserine. The polypeptide is Homoserine O-acetyltransferase (Chlorobaculum parvum (strain DSM 263 / NCIMB 8327) (Chlorobium vibrioforme subsp. thiosulfatophilum)).